We begin with the raw amino-acid sequence, 817 residues long: TPR repeat-containing protein C19B12.01 (817 aa).

Disordered regions lie at residues 276–298 (DQKSLAPSEELDPILSSEDPNHP) and 386–413 (GKSPEGVDKPENDEGLGSFLPKPQDGEN). TPR repeat units follow at residues 459–492 (LQMWDCVVMCHCSLNRQDLAVQVIKRELENDPYD), 521–554 (APAQRSLGKYYYKKGDLLQAMNCFNESLKINPLS), 555–588 (YPTWFTYGCAALELQKYDAAMEAFSRCLSINPED), and 625–658 (WRIWENYMLISVDVNKWSEVIRALRRIIEIKGKD).

In Schizosaccharomyces pombe (strain 972 / ATCC 24843) (Fission yeast), this protein is TPR repeat-containing protein C19B12.01.